Reading from the N-terminus, the 472-residue chain is RNA pseudouridine synthase 6, chloroplastic (472 aa).

The N-terminal 66 residues, 1–66, are a transit peptide targeting the chloroplast; it reads MASPALTGGY…TDSQNQTTLS (66 aa). The 108-residue stretch at 101-208 folds into the S4 RNA-binding domain; sequence VLVSEFISKQ…SPRCYEIDWK (108 aa). Asp-261 is a catalytic residue.

This sequence belongs to the pseudouridine synthase RluA family.

It localises to the plastid. Its subcellular location is the chloroplast. It carries out the reaction a uridine in RNA = a pseudouridine in RNA. This Arabidopsis thaliana (Mouse-ear cress) protein is RNA pseudouridine synthase 6, chloroplastic.